We begin with the raw amino-acid sequence, 550 residues long: Glucose-6-phosphate isomerase (550 aa).

D-glucose 6-phosphate is bound by residues 164–165 (GS), 215–220 (SKTFTT), Q359, E363, and H394. E363 serves as the catalytic Proton donor. Residue H394 is part of the active site. A Phosphothreonine modification is found at T455. K516 contributes to the D-glucose 6-phosphate binding site. K516 is an active-site residue.

It belongs to the GPI family. In terms of assembly, homodimer.

It is found in the cytoplasm. The protein resides in the cytosol. It catalyses the reaction alpha-D-glucose 6-phosphate = beta-D-fructose 6-phosphate. Its pathway is carbohydrate degradation; glycolysis; D-glyceraldehyde 3-phosphate and glycerone phosphate from D-glucose: step 2/4. Functionally, in the cytoplasm, catalyzes the conversion of glucose-6-phosphate to fructose-6-phosphate, the second step in glycolysis, and the reverse reaction during gluconeogenesis. The protein is Glucose-6-phosphate isomerase (pgi1) of Schizosaccharomyces pombe (strain 972 / ATCC 24843) (Fission yeast).